Here is a 380-residue protein sequence, read N- to C-terminus: Dual-specificity RNA methyltransferase RlmN (380 aa).

The Proton acceptor role is filled by E94. The Radical SAM core domain maps to 100–339; sequence DGDRATLCVS…VTVRKTRGDD (240 aa). C107 and C344 are oxidised to a cystine. Residues C114, C118, and C121 each contribute to the [4Fe-4S] cluster site. S-adenosyl-L-methionine is bound by residues 168 to 169, S200, 222 to 224, and N301; these read GE and SLH. The active-site S-methylcysteine intermediate is C344.

It belongs to the radical SAM superfamily. RlmN family. [4Fe-4S] cluster is required as a cofactor.

Its subcellular location is the cytoplasm. The enzyme catalyses adenosine(2503) in 23S rRNA + 2 reduced [2Fe-2S]-[ferredoxin] + 2 S-adenosyl-L-methionine = 2-methyladenosine(2503) in 23S rRNA + 5'-deoxyadenosine + L-methionine + 2 oxidized [2Fe-2S]-[ferredoxin] + S-adenosyl-L-homocysteine. The catalysed reaction is adenosine(37) in tRNA + 2 reduced [2Fe-2S]-[ferredoxin] + 2 S-adenosyl-L-methionine = 2-methyladenosine(37) in tRNA + 5'-deoxyadenosine + L-methionine + 2 oxidized [2Fe-2S]-[ferredoxin] + S-adenosyl-L-homocysteine. Its function is as follows. Specifically methylates position 2 of adenine 2503 in 23S rRNA and position 2 of adenine 37 in tRNAs. m2A2503 modification seems to play a crucial role in the proofreading step occurring at the peptidyl transferase center and thus would serve to optimize ribosomal fidelity. The chain is Dual-specificity RNA methyltransferase RlmN from Vibrio atlanticus (strain LGP32) (Vibrio splendidus (strain Mel32)).